A 118-amino-acid chain; its full sequence is UPF0058 protein MJ1132 (118 aa).

Belongs to the UPF0058 family.

This Methanocaldococcus jannaschii (strain ATCC 43067 / DSM 2661 / JAL-1 / JCM 10045 / NBRC 100440) (Methanococcus jannaschii) protein is UPF0058 protein MJ1132.